We begin with the raw amino-acid sequence, 376 residues long: tRNA-aminoacylation cofactor ARC1 (376 aa).

An interaction with methionyl-tRNA synthetase MES1 region spans residues 22-46 (KEQSAQAAQWESVLKSGQIQPHLDQ). 2 interaction with glutamyl-tRNA synthetase GUS1 regions span residues 52–61 (RDNTFIVSTL) and 91–121 (TYTT…EINH). Residues 133 to 206 (KKKAPAGGAA…QNKAPEKPKP (74 aa)) form a disordered region. A compositionally biased stretch (basic and acidic residues) spans 146 to 180 (AKADEDVSKKAKKQDHPRGKPDEETLKKLREEAKA). Residues 186 to 199 (KAANAKQQQEQQNK) show a composition bias toward low complexity. The 103-residue stretch at 205-307 (KPSAIDFRVG…KDSKAGDKVF (103 aa)) folds into the tRNA-binding domain.

It belongs to the tRNA-aminoacylation cofactor ARC1 family. In terms of assembly, component of a yeast aminoacyl-tRNA synthase (aaRS) complex formed by methionyl-tRNA synthase MES1, glutamyl-tRNA synthase GUS1 and the tRNA aminoacylation cofactor ARC1 in a stoichiometric complex. Interacts (via N-ter) with MES1 (via N-ter) and GUS1 (via N-ter). Can also form a stable binary complex with either MES1 or GUS1 that is functional in terms of aminoacylation.

It is found in the cytoplasm. Its function is as follows. Binds to tRNA and functions as a cofactor for the methionyl-tRNA synthetase (MetRS) and glutamyl-tRNA synthetase (GluRS). Forms a complex with MetRS and GluRS and increases their affinity for cognate tRNAs due to the presence of a tRNA binding domain in its middle and C-terminal part. Binds specifically G4 quadruplex nucleic acid structures (these are four-stranded right-handed helices, stabilized by guanine base quartets). Also required for cytoplasmic confinement of the synthetases and tRNA. This chain is tRNA-aminoacylation cofactor ARC1 (ARC1), found in Saccharomyces cerevisiae (strain ATCC 204508 / S288c) (Baker's yeast).